We begin with the raw amino-acid sequence, 323 residues long: Transcription factor MYB108 (323 aa).

HTH myb-type domains lie at 16–68 (EMDL…LNYL) and 69–123 (RPDV…QKHA). 2 DNA-binding regions (H-T-H motif) span residues 44–68 (WNSL…LNYL) and 96–119 (WSKI…RTRV).

In terms of assembly, interacts with BOI, but not with BRG1. In terms of processing, ubiquitinated in vitro by BOI. As to expression, expressed specifically in flowers. Restricted to anthers in maturing flowers. Strongest expression in the vascular and connective tissue where the anther attaches to the filament. Not detected in pollen.

It localises to the nucleus. Its function is as follows. Transcription factor contributing to the regulation of stamen maturation and male fertility in response to jasmonate signaling. Required for correct timing of anther dehiscence. Acts as a negative regulator of abscisic acid-induced cell death. Not involved in the regulation of BOI. Regulated by MYB21 and at a lower level by MYB24. Negatively regulated by the proteasome in an SCF(COI1) E3 ubiquitin-protein ligase complex-dependent manner. The chain is Transcription factor MYB108 (MYB108) from Arabidopsis thaliana (Mouse-ear cress).